Here is a 37-residue protein sequence, read N- to C-terminus: Photosystem I reaction center subunit VIII (37 aa).

A helical membrane pass occupies residues 9–29 (SIFVPLVGLVFPAIAMASLFL).

It belongs to the PsaI family.

It localises to the plastid. The protein localises to the chloroplast thylakoid membrane. In terms of biological role, may help in the organization of the PsaL subunit. This Cucumis sativus (Cucumber) protein is Photosystem I reaction center subunit VIII.